Reading from the N-terminus, the 765-residue chain is Probable serine/threonine-protein kinase DDB_G0271402 (765 aa).

The Protein kinase domain maps to 35-328 (LEFGQEIGKG…KEITERLKSL (294 aa)). Residues 41-49 (IGKGAYGKI) and K62 each bind ATP. The active-site Proton acceptor is D192. Disordered stretches follow at residues 371 to 393 (IVHN…NNSN), 443 to 477 (SMGD…KIIN), 491 to 527 (SSDL…NNNS), 545 to 620 (PIQI…QQYQ), 654 to 684 (PLNI…HHHL), 699 to 738 (IISS…PTNI), and 746 to 765 (ASNS…TVQS). A compositionally biased stretch (acidic residues) spans 446–458 (DESDLDSDDEDDS). 5 stretches are compositionally biased toward low complexity: residues 459-470 (YTSSASSSRCNS), 499-527 (NGNN…NNNS), 562-605 (PPTS…PKSN), 662-678 (NNNN…GNVN), and 699-720 (IISS…SLTS).

It belongs to the protein kinase superfamily. TKL Ser/Thr protein kinase family.

It catalyses the reaction L-seryl-[protein] + ATP = O-phospho-L-seryl-[protein] + ADP + H(+). The enzyme catalyses L-threonyl-[protein] + ATP = O-phospho-L-threonyl-[protein] + ADP + H(+). This Dictyostelium discoideum (Social amoeba) protein is Probable serine/threonine-protein kinase DDB_G0271402.